The primary structure comprises 143 residues: Large ribosomal subunit protein uL11 (143 aa).

Belongs to the universal ribosomal protein uL11 family. Part of the ribosomal stalk of the 50S ribosomal subunit. Interacts with L10 and the large rRNA to form the base of the stalk. L10 forms an elongated spine to which L12 dimers bind in a sequential fashion forming a multimeric L10(L12)X complex. In terms of processing, one or more lysine residues are methylated.

In terms of biological role, forms part of the ribosomal stalk which helps the ribosome interact with GTP-bound translation factors. The polypeptide is Large ribosomal subunit protein uL11 (Pseudomonas savastanoi pv. phaseolicola (strain 1448A / Race 6) (Pseudomonas syringae pv. phaseolicola (strain 1448A / Race 6))).